Consider the following 391-residue polypeptide: MCTSANNRLDQLTQILHPENLLNPTNASHPESSLRPDHPFKIAVVGSGNWGTTIAKIVSENAVARPHLFSHFVNMWVFEEKIDGTNLTEIINTRHENIKYLPGVKLPKNLIAVPDIVKAVKGADLIVFNLPHQFLPRILKQLKGHVPKTTRAISCLKGLEVNANGCKLLSTVIEEELGIACGALSGANLAPEIARGNWSETTVAYRVPADYRGPGKDIDKLVLKALFHRPYFHVNVIDDVAGVSIAGALKNVVALAVGFVEGLGWGDNAKAAVMRVGLLETIKFAKLFFNDAEIDTFTGESAGVADLITTCSGGRNVKVGRYMAETGCAAEEAEKKLLNGQSSQGIVTTKEVHEFLTNVNKLEEFPLFEATYQITFGSESIENLPNLLNNY.

Residues 46-51 (GSGNWG), Phe-78, and Phe-134 contribute to the NAD(+) site. Lys-157 is a binding site for substrate. Residue Ala-190 coordinates NAD(+). Lys-250 functions as the Proton acceptor in the catalytic mechanism. NAD(+)-binding residues include Arg-315 and Gln-344. Residue 315-316 (RN) coordinates substrate.

This sequence belongs to the NAD-dependent glycerol-3-phosphate dehydrogenase family.

It catalyses the reaction sn-glycerol 3-phosphate + NAD(+) = dihydroxyacetone phosphate + NADH + H(+). In Candida tropicalis (Yeast), this protein is Glycerol-3-phosphate dehydrogenase [NAD(+)] (GPD).